Consider the following 948-residue polypeptide: Bifunctional glutamine synthetase adenylyltransferase/adenylyl-removing enzyme (948 aa).

Residues M1 to P445 form an adenylyl removase region. Positions E451–F948 are adenylyl transferase.

This sequence belongs to the GlnE family. It depends on Mg(2+) as a cofactor.

The enzyme catalyses [glutamine synthetase]-O(4)-(5'-adenylyl)-L-tyrosine + phosphate = [glutamine synthetase]-L-tyrosine + ADP. The catalysed reaction is [glutamine synthetase]-L-tyrosine + ATP = [glutamine synthetase]-O(4)-(5'-adenylyl)-L-tyrosine + diphosphate. In terms of biological role, involved in the regulation of glutamine synthetase GlnA, a key enzyme in the process to assimilate ammonia. When cellular nitrogen levels are high, the C-terminal adenylyl transferase (AT) inactivates GlnA by covalent transfer of an adenylyl group from ATP to specific tyrosine residue of GlnA, thus reducing its activity. Conversely, when nitrogen levels are low, the N-terminal adenylyl removase (AR) activates GlnA by removing the adenylyl group by phosphorolysis, increasing its activity. The regulatory region of GlnE binds the signal transduction protein PII (GlnB) which indicates the nitrogen status of the cell. The polypeptide is Bifunctional glutamine synthetase adenylyltransferase/adenylyl-removing enzyme (Methylococcus capsulatus (strain ATCC 33009 / NCIMB 11132 / Bath)).